Reading from the N-terminus, the 500-residue chain is V-type proton ATPase subunit B (500 aa).

This sequence belongs to the ATPase alpha/beta chains family. V-ATPase is a heteromultimeric enzyme composed of a peripheral catalytic V1 complex (main components: subunits A, B, C, D, E, and F) attached to an integral membrane V0 proton pore complex (main component: the proteolipid protein).

In terms of biological role, non-catalytic subunit of the peripheral V1 complex of vacuolar ATPase. V-ATPase is responsible for acidifying a variety of intracellular compartments in eukaryotic cells. This is V-type proton ATPase subunit B from Cyanidium caldarium (Red alga).